The primary structure comprises 413 residues: Tryptophan synthase beta chain (413 aa).

N6-(pyridoxal phosphate)lysine is present on K106.

The protein belongs to the TrpB family. In terms of assembly, tetramer of two alpha and two beta chains. The cofactor is pyridoxal 5'-phosphate.

It catalyses the reaction (1S,2R)-1-C-(indol-3-yl)glycerol 3-phosphate + L-serine = D-glyceraldehyde 3-phosphate + L-tryptophan + H2O. It functions in the pathway amino-acid biosynthesis; L-tryptophan biosynthesis; L-tryptophan from chorismate: step 5/5. Its function is as follows. The beta subunit is responsible for the synthesis of L-tryptophan from indole and L-serine. The protein is Tryptophan synthase beta chain of Methylobacterium radiotolerans (strain ATCC 27329 / DSM 1819 / JCM 2831 / NBRC 15690 / NCIMB 10815 / 0-1).